The sequence spans 510 residues: Replication factor C large subunit (510 aa).

An ATP-binding site is contributed by 48-55 (GPPGTGKT). Residues 459 to 510 (MESMLERKREESEVEEEAKEIEEAVEKAEEEEEREEKKKEGGGEQRTLDAFF) form a disordered region. Positions 493–510 (EEKKKEGGGEQRTLDAFF) are enriched in basic and acidic residues.

This sequence belongs to the activator 1 small subunits family. RfcL subfamily. Heteromultimer composed of small subunits (RfcS) and large subunits (RfcL).

Its function is as follows. Part of the RFC clamp loader complex which loads the PCNA sliding clamp onto DNA. This is Replication factor C large subunit from Methanopyrus kandleri (strain AV19 / DSM 6324 / JCM 9639 / NBRC 100938).